A 351-amino-acid chain; its full sequence is MQQNALLQQLLADNDLSSAEMEACITAIMTGGFSDIAIAAILALLQKKGVKATELSGAYRAMMTHAIPIELDEHAVDTCGTGGDHAGTFNVSTVAAIIANGAGVSIAKHGNRSVTSRCGSADVLEALGYTIDLSPEATMELFSKTRFAFLFAPLYHPSMKAVAHIRRELGIRTIFNTLGPLANPACVKRQVIGVYDPSIMELYIETLMKTGCRHAMVVHGKTESGAPLDESSVCGITHISELHEGVVSYHSVIPEEFGLSRWKTADLKGGDREDNAMIIRRILDGSASQAQIDASIYAAAMACYVSGKATCIDEGLCLCKESLENGDAAKNFSRILDLNREIADKHRTAVN.

5-phospho-alpha-D-ribose 1-diphosphate-binding positions include Gly-80, 83–84 (GD), Thr-88, 90–93 (NVST), 108–116 (KHGNRSVTS), and Ser-120. Gly-80 contributes to the anthranilate binding site. Mg(2+) is bound at residue Ser-92. Asn-111 serves as a coordination point for anthranilate. Arg-166 is a binding site for anthranilate. Residues Asp-229 and Glu-230 each coordinate Mg(2+).

The protein belongs to the anthranilate phosphoribosyltransferase family. In terms of assembly, homodimer. The cofactor is Mg(2+).

The enzyme catalyses N-(5-phospho-beta-D-ribosyl)anthranilate + diphosphate = 5-phospho-alpha-D-ribose 1-diphosphate + anthranilate. It participates in amino-acid biosynthesis; L-tryptophan biosynthesis; L-tryptophan from chorismate: step 2/5. Catalyzes the transfer of the phosphoribosyl group of 5-phosphorylribose-1-pyrophosphate (PRPP) to anthranilate to yield N-(5'-phosphoribosyl)-anthranilate (PRA). This chain is Anthranilate phosphoribosyltransferase, found in Prosthecochloris aestuarii (strain DSM 271 / SK 413).